The sequence spans 448 residues: Glucose-6-phosphate isomerase (448 aa).

The active-site Proton donor is glutamate 290. Catalysis depends on residues histidine 311 and lysine 425.

The protein belongs to the GPI family.

It is found in the cytoplasm. It carries out the reaction alpha-D-glucose 6-phosphate = beta-D-fructose 6-phosphate. It functions in the pathway carbohydrate biosynthesis; gluconeogenesis. The protein operates within carbohydrate degradation; glycolysis; D-glyceraldehyde 3-phosphate and glycerone phosphate from D-glucose: step 2/4. Catalyzes the reversible isomerization of glucose-6-phosphate to fructose-6-phosphate. This chain is Glucose-6-phosphate isomerase, found in Acetivibrio thermocellus (strain ATCC 27405 / DSM 1237 / JCM 9322 / NBRC 103400 / NCIMB 10682 / NRRL B-4536 / VPI 7372) (Clostridium thermocellum).